The primary structure comprises 135 residues: Transcription antitermination protein NusB (135 aa).

Belongs to the NusB family.

In terms of biological role, involved in transcription antitermination. Required for transcription of ribosomal RNA (rRNA) genes. Binds specifically to the boxA antiterminator sequence of the ribosomal RNA (rrn) operons. This is Transcription antitermination protein NusB from Shewanella halifaxensis (strain HAW-EB4).